The following is a 64-amino-acid chain: Fatty acid synthase (64 aa).

The region spanning 1-64 (AEGEGQRDLL…VLSMREVRQL (64 aa)) is the Carrier domain. Ser38 carries the O-(pantetheine 4'-phosphoryl)serine; alternate modification. The residue at position 38 (Ser38) is a Phosphoserine; alternate.

As to quaternary structure, homodimer which is arranged in a head to tail fashion. Interacts with CEACAM1; this interaction is insulin and phosphorylation-dependent; reduces fatty-acid synthase activity.

The protein localises to the cytoplasm. It is found in the melanosome. It catalyses the reaction acetyl-CoA + n malonyl-CoA + 2n NADPH + 2n H(+) = a long-chain fatty acid + (n+1) CoA + n CO2 + 2n NADP(+).. Its function is as follows. Fatty acid synthetase catalyzes the formation of long-chain fatty acids from acetyl-CoA, malonyl-CoA and NADPH. This multifunctional protein has 7 catalytic activities as an acyl carrier protein. In Oryctolagus cuniculus (Rabbit), this protein is Fatty acid synthase (FASN).